We begin with the raw amino-acid sequence, 428 residues long: Tryptophan synthase beta chain (428 aa).

N6-(pyridoxal phosphate)lysine is present on Lys100.

This sequence belongs to the TrpB family. In terms of assembly, tetramer of two alpha and two beta chains. The cofactor is pyridoxal 5'-phosphate.

It carries out the reaction (1S,2R)-1-C-(indol-3-yl)glycerol 3-phosphate + L-serine = D-glyceraldehyde 3-phosphate + L-tryptophan + H2O. It functions in the pathway amino-acid biosynthesis; L-tryptophan biosynthesis; L-tryptophan from chorismate: step 5/5. In terms of biological role, the beta subunit is responsible for the synthesis of L-tryptophan from indole and L-serine. This chain is Tryptophan synthase beta chain, found in Streptomyces avermitilis (strain ATCC 31267 / DSM 46492 / JCM 5070 / NBRC 14893 / NCIMB 12804 / NRRL 8165 / MA-4680).